Reading from the N-terminus, the 451-residue chain is DNA polymerase delta subunit 3 (451 aa).

Disordered regions lie at residues 187–241 (SQAK…AASS), 259–386 (KQTP…KVLR), and 404–451 (AWES…FAKK). A compositionally biased stretch (polar residues) spans 200 to 216 (PSTSQVKEAPKASQTVE). The span at 225–241 (SAPAKKGSSAPKSAASS) shows a compositional bias: low complexity. Residues 306 to 316 (QREEELRRMME) show a composition bias toward basic and acidic residues. Positions 329-353 (EEEEEEEEEEESEHEQLPAEEEPMA) are enriched in acidic residues. Residues 354 to 366 (EEPKAPEPVKEEP) are compositionally biased toward basic and acidic residues. Positions 376–386 (GRRRGKRKVLR) are enriched in basic residues. A PIP-box motif is present at residues 441–448 (QGSIMSWF).

In terms of assembly, component of the DNA polymerase delta complex which consists of PolD1, PolD2, PolD3 and PolD4, with PolD1 bearing DNA polymerase and 3' to 5' proofreading exonuclease activities. Directly interacts with PCNA.

It localises to the nucleus. Functionally, accessory component of the DNA polymerase delta complex. The complex is required for the maintenance of genome integrity, acting in concert with the sliding clamp processivity factor PCNA. The polypeptide is DNA polymerase delta subunit 3 (Chaetomium thermophilum (strain DSM 1495 / CBS 144.50 / IMI 039719) (Thermochaetoides thermophila)).